Consider the following 30-residue polypeptide: Arsenate respiratory reductase iron-sulfur subunit ArrB (30 aa).

Cys12, Cys15, Cys18, and Cys22 together coordinate [4Fe-4S] cluster.

As to quaternary structure, heterodimer composed of one large subunit (ArrA) and one small subunit (ArrB). Requires [4Fe-4S] cluster as cofactor.

The protein localises to the periplasm. In terms of biological role, component of the arsenate respiratory reductase (Arr) complex, which catalyzes the reduction of arsenate (As(V)) to arsenite (As(III)). ArrB is probably the electron transfer subunit. The chain is Arsenate respiratory reductase iron-sulfur subunit ArrB from Chrysiogenes arsenatis.